The sequence spans 273 residues: Undecaprenyl-diphosphatase (273 aa).

8 consecutive transmembrane segments (helical) span residues 18-40 (GLTE…LLGF), 45-65 (AKTF…VVFW), 92-112 (GHIL…HEQI), 114-134 (AIFA…LLLA), 151-171 (LTYL…WPGF), 189-209 (YAAS…ATVL), 225-245 (MFAI…KFFL), and 253-273 (FVPF…ILIG).

It belongs to the UppP family.

Its subcellular location is the cell inner membrane. The enzyme catalyses di-trans,octa-cis-undecaprenyl diphosphate + H2O = di-trans,octa-cis-undecaprenyl phosphate + phosphate + H(+). Catalyzes the dephosphorylation of undecaprenyl diphosphate (UPP). Confers resistance to bacitracin. The sequence is that of Undecaprenyl-diphosphatase from Sodalis glossinidius (strain morsitans).